A 389-amino-acid polypeptide reads, in one-letter code: Probable protein phosphatase 2C 12 (389 aa).

Positions 42 to 356 (VASLFSQRGK…DDCSAVCLFL (315 aa)) constitute a PPM-type phosphatase domain. Mn(2+) contacts are provided by aspartate 77 and glycine 78. The segment at 119 to 145 (AFSDDAAASSSADSSGNSSPQPSASAS) is disordered. A compositionally biased stretch (low complexity) spans 121–145 (SDDAAASSSADSSGNSSPQPSASAS). 2 residues coordinate Mn(2+): aspartate 301 and aspartate 347.

It belongs to the PP2C family. Mg(2+) is required as a cofactor. Requires Mn(2+) as cofactor.

It catalyses the reaction O-phospho-L-seryl-[protein] + H2O = L-seryl-[protein] + phosphate. The enzyme catalyses O-phospho-L-threonyl-[protein] + H2O = L-threonyl-[protein] + phosphate. The polypeptide is Probable protein phosphatase 2C 12 (Oryza sativa subsp. japonica (Rice)).